Reading from the N-terminus, the 431-residue chain is Protein S-Myc (431 aa).

Position 36 is a phosphotyrosine; by Tyr-kinases (Y36). The bHLH domain maps to 348–400 (ERRRNHNRMERQRRDIMRSSFLNLRDLVPELVHNEKAAKVVILKKATEYIHTL). A leucine-zipper region spans residues 400–421 (LQADESKLLVERKKLYERQQQL).

As to quaternary structure, efficient DNA binding requires dimerization with another bHLH protein.

It is found in the nucleus. Has apoptosis-inducing activity. The protein is Protein S-Myc (Mycs) of Mus musculus (Mouse).